The primary structure comprises 370 residues: Galanin receptor type 3 (370 aa).

Topologically, residues 1-20 (MADIQNISLDSPGSVGAVAV) are extracellular. N-linked (GlcNAc...) asparagine glycosylation is present at N6. The chain crosses the membrane as a helical span at residues 21–41 (PVVFALIFLLGMVGNGLVLAV). Topologically, residues 42 to 57 (LLQPGPSAWQEPGSTT) are cytoplasmic. A helical transmembrane segment spans residues 58-78 (DLFILNLAVADLCFILCCVPF). At 79 to 96 (QAAIYTLDAWLFGAFVCK) the chain is on the extracellular side. Residues C95 and C172 are joined by a disulfide bond. The chain crosses the membrane as a helical span at residues 97-118 (TVHLLIYLTMYASSFTLAAVSV). Topologically, residues 119–138 (DRYLAVRHPLRSRALRTPRN) are cytoplasmic. Residues 139–159 (ARAAVGLVWLLAALFSAPYLS) traverse the membrane as a helical segment. At 160–184 (YYGTVRYGALELCVPAWEDARRRAL) the chain is on the extracellular side. A helical membrane pass occupies residues 185-205 (DVATFAAGYLLPVTVVSLAYG). Residues 206–236 (RTLCFLWAAVGPAGAAAAEARRRATGRAGRA) lie on the Cytoplasmic side of the membrane. A helical transmembrane segment spans residues 237 to 257 (MLTVAALYALCWGPHHALILC). The Extracellular segment spans residues 258-259 (FW). The chain crosses the membrane as a helical span at residues 260 to 280 (YGRFAFSPATYACRLASHCLA). Topologically, residues 281–370 (YANSCLNPLV…RLTLSARGPQ (90 aa)) are cytoplasmic. A lipid anchor (S-palmitoyl cysteine) is attached at C308. Positions 328-370 (QPASSGPAGYPGDARPRGWSMEPRGDALRGGETRLTLSARGPQ) are disordered. The segment covering 350 to 359 (PRGDALRGGE) has biased composition (basic and acidic residues).

This sequence belongs to the G-protein coupled receptor 1 family.

It localises to the cell membrane. Functionally, receptor for the hormone galanin and spexin-1. This Mus musculus (Mouse) protein is Galanin receptor type 3 (Galr3).